The chain runs to 523 residues: Protein nucleotidyltransferase YdiU (523 aa).

The ATP site is built by Gly-101, Gly-103, Arg-104, Lys-128, Asp-140, Gly-141, Arg-198, and Arg-205. Asp-275 acts as the Proton acceptor in catalysis. Mg(2+) is bound by residues Asn-276 and Asp-285. ATP is bound at residue Asp-285.

Belongs to the SELO family. It depends on Mg(2+) as a cofactor. Mn(2+) is required as a cofactor.

It carries out the reaction L-seryl-[protein] + ATP = 3-O-(5'-adenylyl)-L-seryl-[protein] + diphosphate. The catalysed reaction is L-threonyl-[protein] + ATP = 3-O-(5'-adenylyl)-L-threonyl-[protein] + diphosphate. The enzyme catalyses L-tyrosyl-[protein] + ATP = O-(5'-adenylyl)-L-tyrosyl-[protein] + diphosphate. It catalyses the reaction L-histidyl-[protein] + UTP = N(tele)-(5'-uridylyl)-L-histidyl-[protein] + diphosphate. It carries out the reaction L-seryl-[protein] + UTP = O-(5'-uridylyl)-L-seryl-[protein] + diphosphate. The catalysed reaction is L-tyrosyl-[protein] + UTP = O-(5'-uridylyl)-L-tyrosyl-[protein] + diphosphate. Nucleotidyltransferase involved in the post-translational modification of proteins. It can catalyze the addition of adenosine monophosphate (AMP) or uridine monophosphate (UMP) to a protein, resulting in modifications known as AMPylation and UMPylation. This chain is Protein nucleotidyltransferase YdiU, found in Aromatoleum aromaticum (strain DSM 19018 / LMG 30748 / EbN1) (Azoarcus sp. (strain EbN1)).